A 630-amino-acid polypeptide reads, in one-letter code: Plastin-3 (630 aa).

2 consecutive EF-hand domains span residues 12–47 (DELDELKEAFAKVDLNSNGFICDYELHELFKEANMP) and 52–87 (KVREIIQKLMLDGDRNKDGKISFNEFVYIFQEVKSS). 9 residues coordinate Ca(2+): D25, N27, N29, E36, D65, N67, D69, K71, and E76. Actin-binding regions lie at residues 109–382 (TSEL…ALTK) and 383–627 (PENQ…GRGM). Calponin-homology (CH) domains lie at 123–239 (EEEK…KIGL) and 267–378 (LSPE…NKYP). Phosphoserine occurs at positions 268, 293, 326, and 339. T391 bears the Phosphothreonine mark. 2 Calponin-homology (CH) domains span residues 397–506 (TREE…RRYT) and 518–627 (KATD…GRGM).

Monomer.

It localises to the cytoplasm. Actin-bundling protein. The protein is Plastin-3 (Pls3) of Rattus norvegicus (Rat).